Here is an 856-residue protein sequence, read N- to C-terminus: DNA mismatch repair protein MutS (856 aa).

Position 623–630 (623–630 (GPNMSGKS)) interacts with ATP.

This sequence belongs to the DNA mismatch repair MutS family.

Functionally, this protein is involved in the repair of mismatches in DNA. It is possible that it carries out the mismatch recognition step. This protein has a weak ATPase activity. The chain is DNA mismatch repair protein MutS from Natronomonas pharaonis (strain ATCC 35678 / DSM 2160 / CIP 103997 / JCM 8858 / NBRC 14720 / NCIMB 2260 / Gabara) (Halobacterium pharaonis).